A 71-amino-acid chain; its full sequence is Ubiquinol-cytochrome c reductase complex assembly factor 6 (71 aa).

Topologically, residues M1 to S8 are mitochondrial matrix. A helical; Signal-anchor for type II membrane protein transmembrane segment spans residues T9 to A25. The Mitochondrial intermembrane portion of the chain corresponds to E26–K71.

Belongs to the UQCC6 family. Interacts with UQCRC1. Interacts with UQCRQ. Interacts with UQCC5. Forms a complex, named COMB/coordinator of mitochondrial CYTB biogenesis, composed of UQCC1, UQCC2, UQCC4, UQCC5 and UQCC6; stabilizes nascent cytochrome b/MT-CYB and promotes its membrane insertion. Forms a complex, named COMA, composed of UQCC1, UQCC2 and UQCC4; activates MT-CYB translation. Forms a complex, named COMC, composed of UQCC1, UQCC2; UQCC3 and UQCC4; mediates MT-CYB hemylation and association with the first nuclear-encoded complex III subunit UQCRQ. Interacts with MT-CYB. Cardiac and skeletal muscle (at protein level).

The protein localises to the mitochondrion inner membrane. In terms of biological role, required for the assembly and stability of the mitochondrial ubiquinol-cytochrome c reductase complex (complex III (CIII) or cytochrome b-c1 complex), a multisubunit transmembrane complex that is part of the mitochondrial electron transport chain (ETC) which drives oxidative phosphorylation. Mediates early complex III biogenesis. Participates in regulating the levels of electron transport chain proteins, and therefore energy supply, in response to changes in energy demand. Also required for cytochrome c oxidase complex (complex IV) assembly. The protein is Ubiquinol-cytochrome c reductase complex assembly factor 6 of Homo sapiens (Human).